Reading from the N-terminus, the 340-residue chain is Probable rRNA-processing protein EBP2 homolog (340 aa).

A compositionally biased stretch (basic residues) spans 1-10; it reads MVRKMNKLAK. 2 disordered regions span residues 1-59 and 245-340; these read MVRK…DDDE and HGLD…RGRR. Composition is skewed to acidic residues over residues 23 to 37 and 46 to 59; these read PESDSDGSEFDFDNA and MDIEEVESDGDDDE. A coiled-coil region spans residues 206 to 245; that stretch reads QKEVLAAKNTEKKNLAEAVKKHKKGMKQQLEDMLNNVKRH. Composition is skewed to gly residues over residues 264–277 and 318–333; these read GRGGAGRGGAGRGG and PRGGFGGRGRGGGRGG.

It belongs to the EBP2 family.

The protein localises to the nucleus. It is found in the nucleolus. Functionally, required for the processing of the 27S pre-rRNA. The sequence is that of Probable rRNA-processing protein EBP2 homolog from Caenorhabditis elegans.